The primary structure comprises 147 residues: uncharacterized protein (147 aa).

Residues 44 to 147 (LVGYIDKEIH…LKSIKERLSI (104 aa)) form the HTH LytTR-type domain.

Its subcellular location is the cytoplasm. This is an uncharacterized protein from Staphylococcus aureus (strain MW2).